A 432-amino-acid polypeptide reads, in one-letter code: Adenylosuccinate synthetase (432 aa).

GTP-binding positions include 16–22 and 44–46; these read GDEGKGK and GHM. Catalysis depends on aspartate 17, which acts as the Proton acceptor. Positions 17 and 44 each coordinate Mg(2+). Residues 17 to 20, 42 to 45, threonine 132, arginine 146, glutamine 226, threonine 241, and arginine 305 contribute to the IMP site; these read DEGK and NAGH. The active-site Proton donor is histidine 45. Residue 301–307 coordinates substrate; sequence LNTGRPR. GTP contacts are provided by residues arginine 307, 333–335, and 415–417; these read LFD and SVG.

This sequence belongs to the adenylosuccinate synthetase family. Homodimer. It depends on Mg(2+) as a cofactor.

It localises to the cytoplasm. The catalysed reaction is IMP + L-aspartate + GTP = N(6)-(1,2-dicarboxyethyl)-AMP + GDP + phosphate + 2 H(+). The protein operates within purine metabolism; AMP biosynthesis via de novo pathway; AMP from IMP: step 1/2. In terms of biological role, plays an important role in the de novo pathway of purine nucleotide biosynthesis. Catalyzes the first committed step in the biosynthesis of AMP from IMP. The polypeptide is Adenylosuccinate synthetase (Mycoplasma mycoides subsp. mycoides SC (strain CCUG 32753 / NCTC 10114 / PG1)).